A 260-amino-acid polypeptide reads, in one-letter code: CD40 ligand (260 aa).

Topologically, residues 1-22 are cytoplasmic; it reads MIETYSQPSPRSVATGLPASMK. The chain crosses the membrane as a helical; Signal-anchor for type II membrane protein span at residues 23–46; it reads IFMYLLTVFLITQMIGSVLFAVYL. The Extracellular segment spans residues 47 to 260; it reads HRRLDKVEEE…GFSSFGLLKL (214 aa). Residues 121-260 enclose the THD domain; that stretch reads IAAHVVSEAN…GFSSFGLLKL (140 aa). A disulfide bond links cysteine 177 and cysteine 217. An N-linked (GlcNAc...) asparagine glycan is attached at asparagine 239.

The protein belongs to the tumor necrosis factor family. In terms of assembly, homotrimer. Interacts with CD28. CD40 ligand, soluble form: Exists as either a monomer or a homotrimer. Forms a ternary complex between CD40 and integrins for CD40-CD40LG signaling. The soluble form derives from the membrane form by proteolytic processing. As to expression, specifically expressed on activated CD4+ T-lymphocytes.

Its subcellular location is the cell membrane. The protein localises to the cell surface. It localises to the secreted. Cytokine that acts as a ligand to CD40/TNFRSF5. Costimulates T-cell proliferation and cytokine production. Its cross-linking on T-cells generates a costimulatory signal which enhances the production of IL4 and IL10 in conjunction with the TCR/CD3 ligation and CD28 costimulation. Induces the activation of NF-kappa-B. Induces the activation of kinases MAPK8 and PAK2 in T-cells. Mediates B-cell proliferation in the absence of co-stimulus as well as IgE production in the presence of IL4. Involved in immunoglobulin class switching. In terms of biological role, acts as a ligand for integrins, specifically ITGA5:ITGB1 and ITGAV:ITGB3; both integrins and the CD40 receptor are required for activation of CD40-CD40LG signaling, which have cell-type dependent effects, such as B-cell activation, NF-kappa-B signaling and anti-apoptotic signaling. The chain is CD40 ligand (Cd40lg) from Mus musculus (Mouse).